Consider the following 187-residue polypeptide: Acetyl-CoA decarbonylase/synthase complex subunit epsilon (187 aa).

Blocked amino end (Met) is present on Met-1.

Belongs to the CdhB family. As to quaternary structure, heterotetramer of two alpha and two epsilon subunits. The ACDS complex is made up of alpha, epsilon, beta, gamma and delta subunits with a probable stoichiometry of (alpha(2)epsilon(2))(4)-beta(8)-(gamma(1)delta(1))(8).

In terms of biological role, part of a complex that catalyzes the reversible cleavage of acetyl-CoA, allowing autotrophic growth from CO(2). The alpha-epsilon subcomponent functions as a carbon monoxide dehydrogenase. The precise role of the epsilon subunit is unclear; it may have a stabilizing role within the alpha(2)epsilon(2) component and/or be involved in electron transfer to FAD during a potential FAD-mediated CO oxidation. The chain is Acetyl-CoA decarbonylase/synthase complex subunit epsilon from Methanothrix soehngenii (Methanosaeta concilii).